Here is a 116-residue protein sequence, read N- to C-terminus: Peptidyl-tRNA hydrolase (116 aa).

It belongs to the PTH2 family.

The protein resides in the cytoplasm. The catalysed reaction is an N-acyl-L-alpha-aminoacyl-tRNA + H2O = an N-acyl-L-amino acid + a tRNA + H(+). In terms of biological role, the natural substrate for this enzyme may be peptidyl-tRNAs which drop off the ribosome during protein synthesis. This Methanococcus maripaludis (strain C7 / ATCC BAA-1331) protein is Peptidyl-tRNA hydrolase.